We begin with the raw amino-acid sequence, 373 residues long: 3 beta-hydroxysteroid dehydrogenase/Delta 5--&gt;4-isomerase (373 aa).

Catalysis depends on Y155, which acts as the Proton acceptor. K159 is an NAD(+) binding site. A helical transmembrane segment spans residues 288 to 308; it reads ISLQYWLAFLLEIVSFLLSPI.

The protein belongs to the 3-beta-HSD family.

Its subcellular location is the endoplasmic reticulum membrane. It localises to the mitochondrion membrane. It catalyses the reaction a 3beta-hydroxy-Delta(5)-steroid + NAD(+) = a 3-oxo-Delta(5)-steroid + NADH + H(+). The catalysed reaction is a 3-oxo-Delta(5)-steroid = a 3-oxo-Delta(4)-steroid. Its pathway is lipid metabolism; steroid biosynthesis. 3-beta-HSD is a bifunctional enzyme, that catalyzes the oxidative conversion of Delta(5)-ene-3-beta-hydroxy steroid, and the oxidative conversion of ketosteroids. The 3-beta-HSD enzymatic system plays a crucial role in the biosynthesis of all classes of hormonal steroids. The chain is 3 beta-hydroxysteroid dehydrogenase/Delta 5--&gt;4-isomerase (HSD3B) from Bos taurus (Bovine).